We begin with the raw amino-acid sequence, 153 residues long: Transcriptional repressor NrdR (153 aa).

A zinc finger spans residues 3–34; the sequence is CPYCGHPDTRVVDSRPSDEGMAIRRRRECPSC. In terms of domain architecture, ATP-cone spans 49-136; it reads LMVVKRDGRK…VYREFDSVER (88 aa).

This sequence belongs to the NrdR family. Zn(2+) is required as a cofactor.

Functionally, negatively regulates transcription of bacterial ribonucleotide reductase nrd genes and operons by binding to NrdR-boxes. The chain is Transcriptional repressor NrdR from Thermus thermophilus (strain ATCC BAA-163 / DSM 7039 / HB27).